A 122-amino-acid polypeptide reads, in one-letter code: Riboflavin kinase (122 aa).

4–9 provides a ligand contact to CDP; the sequence is GFGEGA. Residues Thr33 and Asn35 each coordinate Mg(2+). Residues Thr84 and Glu92 each contribute to the FMN site. A CDP-binding site is contributed by 97–100; that stretch reads VNLR.

The protein belongs to the archaeal riboflavin kinase family. The cofactor is Mg(2+).

It carries out the reaction riboflavin + CTP = CDP + FMN + H(+). The protein operates within cofactor biosynthesis; FMN biosynthesis; FMN from riboflavin (CTP route): step 1/1. In terms of biological role, catalyzes the CTP-dependent phosphorylation of riboflavin (vitamin B2) to form flavin mononucleotide (FMN). In Methanothermobacter thermautotrophicus (strain ATCC 29096 / DSM 1053 / JCM 10044 / NBRC 100330 / Delta H) (Methanobacterium thermoautotrophicum), this protein is Riboflavin kinase.